The primary structure comprises 243 residues: Small ribosomal subunit protein uS3 (243 aa).

One can recognise a KH type-2 domain in the interval 39–107; it reads MRKFVMSELK…ETHLNIVEVR (69 aa). The interval 214–243 is disordered; the sequence is ASERRAMEGDAQGPASRDRDRDRDRRRDNA. Residues 229 to 243 are compositionally biased toward basic and acidic residues; it reads SRDRDRDRDRRRDNA.

This sequence belongs to the universal ribosomal protein uS3 family. In terms of assembly, part of the 30S ribosomal subunit. Forms a tight complex with proteins S10 and S14.

Binds the lower part of the 30S subunit head. Binds mRNA in the 70S ribosome, positioning it for translation. The sequence is that of Small ribosomal subunit protein uS3 from Rhizobium johnstonii (strain DSM 114642 / LMG 32736 / 3841) (Rhizobium leguminosarum bv. viciae).